Reading from the N-terminus, the 470-residue chain is MHEPRKLYVKSFGCQMNVYDSHRMADTLAREGFVETQDPAEADLVILNTCHIREKAAEKVYSELGRLRKQKQEAGSDTMIAVAGCVAQAEGAEIMRRAPVVDLVVGPQSYHRLPELLAEAKAGKRVVDTEFPAEDKFDHLPAPTRAATRSRGPAAFVTVQEGCDKFCTFCVVPYTRGAEVSRPVAKIMDEAARLVDQGVREISLIGQNVNAFHGAGPDGTTWSLARLMEHMARLDGLARLRYTTSHPRDMDDDLIAAHRDLPQLMPYLHLPVQSGSDRILAAMNRKHGRDDFFAIIEKMRQARPDMALSSDFIVGFPGESEKDFEDTLDLVRRVGFASAYSFKYSPRPGTPAADHDAQVPEEVKAERLAELQRLLEASKAAFDESCRGRTFDILLEKPGRQAGQLIGRSPYLQSVVVNDPPAAIGDLLTVTITDVGPNSLAGVPAEASEPSVSQSPVSSARSRPLAAMEA.

The MTTase N-terminal domain occupies 5–122; it reads RKLYVKSFGC…LPELLAEAKA (118 aa). [4Fe-4S] cluster is bound by residues C14, C50, C85, C163, C167, and C170. Residues 149–383 enclose the Radical SAM core domain; sequence RSRGPAAFVT…LLEASKAAFD (235 aa). The TRAM domain occupies 384–446; it reads ESCRGRTFDI…PNSLAGVPAE (63 aa). Positions 439 to 470 are disordered; sequence SLAGVPAEASEPSVSQSPVSSARSRPLAAMEA. Residues 444-464 show a composition bias toward low complexity; the sequence is PAEASEPSVSQSPVSSARSRP.

This sequence belongs to the methylthiotransferase family. MiaB subfamily. Monomer. [4Fe-4S] cluster serves as cofactor.

The protein localises to the cytoplasm. It catalyses the reaction N(6)-dimethylallyladenosine(37) in tRNA + (sulfur carrier)-SH + AH2 + 2 S-adenosyl-L-methionine = 2-methylsulfanyl-N(6)-dimethylallyladenosine(37) in tRNA + (sulfur carrier)-H + 5'-deoxyadenosine + L-methionine + A + S-adenosyl-L-homocysteine + 2 H(+). Functionally, catalyzes the methylthiolation of N6-(dimethylallyl)adenosine (i(6)A), leading to the formation of 2-methylthio-N6-(dimethylallyl)adenosine (ms(2)i(6)A) at position 37 in tRNAs that read codons beginning with uridine. The chain is tRNA-2-methylthio-N(6)-dimethylallyladenosine synthase from Xanthobacter autotrophicus (strain ATCC BAA-1158 / Py2).